The chain runs to 369 residues: Actin-related protein T3 (369 aa).

This sequence belongs to the actin family. As to quaternary structure, interacts with PFN3. In terms of tissue distribution, testis specific (at protein level). Expressed specifically in haploid germ cells.

Its subcellular location is the cytoplasm. The protein localises to the cytoskeleton. It localises to the nucleus. The polypeptide is Actin-related protein T3 (Actrt3) (Mus musculus (Mouse)).